Reading from the N-terminus, the 214-residue chain is Large ribosomal subunit protein uL3 (214 aa).

A disordered region spans residues 129–155 (FGRGPMSHGSKNHRRPGSVGAGTTPGR).

It belongs to the universal ribosomal protein uL3 family. In terms of assembly, part of the 50S ribosomal subunit. Forms a cluster with proteins L14 and L19.

In terms of biological role, one of the primary rRNA binding proteins, it binds directly near the 3'-end of the 23S rRNA, where it nucleates assembly of the 50S subunit. This is Large ribosomal subunit protein uL3 from Synechococcus sp. (strain JA-3-3Ab) (Cyanobacteria bacterium Yellowstone A-Prime).